A 356-amino-acid polypeptide reads, in one-letter code: Glucose 1-dehydrogenase 2 (356 aa).

Asp38 provides a ligand contact to Zn(2+). Substrate is bound at residue Ser40. The Zn(2+) site is built by His64 and Glu65. Substrate contacts are provided by Glu114 and Glu150. Position 150 (Glu150) interacts with Zn(2+). NADP(+)-binding positions include 181–184, 206–207, and 301–303; these read NGNL, RR, and VVN. Asn303 is a substrate binding site.

The protein belongs to the zinc-containing alcohol dehydrogenase family. Glucose 1-dehydrogenase subfamily. Requires Zn(2+) as cofactor.

The catalysed reaction is D-glucose + NAD(+) = D-glucono-1,5-lactone + NADH + H(+). It carries out the reaction D-glucose + NADP(+) = D-glucono-1,5-lactone + NADPH + H(+). In terms of biological role, catalyzes the NAD(P)(+)-dependent oxidation of D-glucose to D-gluconate via gluconolactone. Can utilize both NAD(+) and NADP(+) as electron acceptor. Is involved in the degradation of glucose through a modified Entner-Doudoroff pathway. The sequence is that of Glucose 1-dehydrogenase 2 from Haloterrigena turkmenica (strain ATCC 51198 / DSM 5511 / JCM 9101 / NCIMB 13204 / VKM B-1734 / 4k) (Halococcus turkmenicus).